A 21-amino-acid polypeptide reads, in one-letter code: Thylakoid lumenal 13.8 kDa protein (21 aa).

It is found in the plastid. It localises to the chloroplast thylakoid lumen. This chain is Thylakoid lumenal 13.8 kDa protein, found in Spinacia oleracea (Spinach).